Reading from the N-terminus, the 331-residue chain is Aspartate carbamoyltransferase catalytic subunit (331 aa).

Carbamoyl phosphate-binding residues include R62 and T63. K90 is a binding site for L-aspartate. Residues R112, H145, and Q148 each contribute to the carbamoyl phosphate site. L-aspartate is bound by residues R185 and R246. Residues G287 and P288 each coordinate carbamoyl phosphate.

Belongs to the aspartate/ornithine carbamoyltransferase superfamily. ATCase family. Heterododecamer (2C3:3R2) of six catalytic PyrB chains organized as two trimers (C3), and six regulatory PyrI chains organized as three dimers (R2).

It carries out the reaction carbamoyl phosphate + L-aspartate = N-carbamoyl-L-aspartate + phosphate + H(+). Its pathway is pyrimidine metabolism; UMP biosynthesis via de novo pathway; (S)-dihydroorotate from bicarbonate: step 2/3. Functionally, catalyzes the condensation of carbamoyl phosphate and aspartate to form carbamoyl aspartate and inorganic phosphate, the committed step in the de novo pyrimidine nucleotide biosynthesis pathway. The sequence is that of Aspartate carbamoyltransferase catalytic subunit from Synechocystis sp. (strain ATCC 27184 / PCC 6803 / Kazusa).